The chain runs to 312 residues: DNA-directed RNA polymerase subunit alpha (312 aa).

Positions 1 to 225 are alpha N-terminal domain (alpha-NTD); it reads MIEFEKPNIT…VEHFKVFESA (225 aa). Residues 243 to 312 form an alpha C-terminal domain (alpha-CTD) region; it reads KEKKLEMTIE…DLGLSLRQED (70 aa).

Belongs to the RNA polymerase alpha chain family. Homodimer. The RNAP catalytic core consists of 2 alpha, 1 beta, 1 beta' and 1 omega subunit. When a sigma factor is associated with the core the holoenzyme is formed, which can initiate transcription.

The catalysed reaction is RNA(n) + a ribonucleoside 5'-triphosphate = RNA(n+1) + diphosphate. Functionally, DNA-dependent RNA polymerase catalyzes the transcription of DNA into RNA using the four ribonucleoside triphosphates as substrates. This chain is DNA-directed RNA polymerase subunit alpha, found in Lactobacillus helveticus (strain DPC 4571).